A 502-amino-acid chain; its full sequence is Glycogen synthase 1 (502 aa).

Lys18 provides a ligand contact to ADP-alpha-D-glucose.

The protein belongs to the glycosyltransferase 1 family. Bacterial/plant glycogen synthase subfamily.

The catalysed reaction is [(1-&gt;4)-alpha-D-glucosyl](n) + ADP-alpha-D-glucose = [(1-&gt;4)-alpha-D-glucosyl](n+1) + ADP + H(+). The protein operates within glycan biosynthesis; glycogen biosynthesis. Its function is as follows. Synthesizes alpha-1,4-glucan chains using ADP-glucose. In Geobacter metallireducens (strain ATCC 53774 / DSM 7210 / GS-15), this protein is Glycogen synthase 1.